Here is a 406-residue protein sequence, read N- to C-terminus: Copper transport protein CTR1 (406 aa).

The Cytoplasmic segment spans residues 1–152; the sequence is MEGMNMGSSM…HHLHANNSGK (152 aa). A run of 3 repeats spans residues 9–27, 28–46, and 47–65. A 3 X 19 AA tandem repeats of S-M-X-M-X-A-M-S-S-A-S-K-T-X-X-S-X-M-X region spans residues 9-65; it reads SMNMDAMSSASKTVASSMASMSMDAMSSASKTILSSMSSMSMEAMSSASKTLASTMS. Positions 71–117 are disordered; the sequence is SMGSSSMSGMSMSMSSTPTSSASAQTTSDSSMSGMSGMSSSDNSSSS. A helical membrane pass occupies residues 153 to 173; the sequence is AFGIFLLFVVAAFVYKLLLFV. Residues 174–250 lie on the Extracellular side of the membrane; it reads SWCLEVHWFK…RAFLVFTSTM (77 aa). Residues 251–271 form a helical membrane-spanning segment; the sequence is IIYMLMLATMSFVLTYVFAVI. At 272-406 the chain is on the cytoplasmic side; that stretch reads TGLALSEVFF…LLPAEKFTHN (135 aa). The REP-III motif lies at 304 to 315; that stretch reads CPGFGNCQCGRH. Residues 318-406 are disordered; the sequence is PSPDPIAVAD…LLPAEKFTHN (89 aa). Serine 344 is subject to Phosphoserine. Residue lysine 345 forms a Glycyl lysine isopeptide (Lys-Gly) (interchain with G-Cter in ubiquitin) linkage. At serine 349 the chain carries Phosphoserine. Composition is skewed to polar residues over residues 349–375 and 384–395; these read SENNQKKTPTQEEGCNCATDSGKNQAN and SKLQEQSGNMDQ. Phosphothreonine is present on threonine 356. Serine 369 carries the post-translational modification Phosphoserine.

In terms of assembly, homooligomer. In terms of processing, extensively O-glycosylated.

Its subcellular location is the cell membrane. The catalysed reaction is Cu(2+)(in) = Cu(2+)(out). In terms of biological role, high-affinity copper transporter of plasma membrane that mediates copper uptake under low copper conditions. Copper transport through the high affinity system requiring CTRl supplies the iron transport multicopper ferroxidase FET3 with copper, which in turn is required for ferrous iron uptake. The energy for translocation is unlikely to be directly derived from ATP hydrolysis and the exact mechanism driving the transmembrane transport of copper has still to be determined. Binds 4 copper ions via its C-terminal cystein-rich domain and is able to deliver Cu(I) directly to both the chaperone ATX1 and to an N-terminal domain of the CCC2 protein. Also able to mediate the uptake of the anticancer drug cisplatin. This is Copper transport protein CTR1 from Saccharomyces cerevisiae (strain ATCC 204508 / S288c) (Baker's yeast).